The chain runs to 561 residues: Oxygen-dependent choline dehydrogenase (561 aa).

6 to 35 (DYIIIGAGSAGNVLATRLTEDADVSVLLLE) contacts FAD. The active-site Proton acceptor is the histidine 475.

Belongs to the GMC oxidoreductase family. It depends on FAD as a cofactor.

The enzyme catalyses choline + A = betaine aldehyde + AH2. It carries out the reaction betaine aldehyde + NAD(+) + H2O = glycine betaine + NADH + 2 H(+). Its pathway is amine and polyamine biosynthesis; betaine biosynthesis via choline pathway; betaine aldehyde from choline (cytochrome c reductase route): step 1/1. Its function is as follows. Involved in the biosynthesis of the osmoprotectant glycine betaine. Catalyzes the oxidation of choline to betaine aldehyde and betaine aldehyde to glycine betaine at the same rate. This is Oxygen-dependent choline dehydrogenase from Pseudomonas aeruginosa (strain UCBPP-PA14).